We begin with the raw amino-acid sequence, 1060 residues long: MLIEDVDALKSWLAKLLEPICDADPSALANYVVALVKKDKPEKELKAFCADQLDVFLQKETSGFVDKLFESLYTKNYLPPLEPVKPEPKPLVQEKEEIKEEVFQEPAEEERDTRKKKYPSPQKSRSESSERRTREKKREDGKWRDYERYYERNELYREKYDWRRGRSKSRSKSRGLSRSRSRSRGRSKDRDPNRNVEHRERSKFKSERNDLESSYVPVSAPPPSSSEQYSSGAQSIPSTVTVIAPAHHSENTTESWSNYYNNHSSSNSFGRNPPPKRRCRDYDERGFCVLGDLCQFDHGNDPLVVDEVALPSMIPFPPPPPGLPPPPPPGMLMPPMPGPGPGPGPGPGPGPGPGPGPGHSMRLPVPQGHGQPPPSVVLPIPRPPISQSSLINSRDQPGTSAVPNLAPVGARLPPPLPQNLLYTVSERQPMYSREHGAAASERLQLGTPPPLLAARLVPPRNLMGSSIGYHTSVSSPTPLVPDTYEPDGYNPEAPSITSSGRSQYRQFFSRAQTQRPNLIGLTSGDMDANPRAANIVIQTEPPVPVSVNSNVTRVVLEPESRKRAISGLEGPLTKKPWLGKQGNNNQSKPGFLRKNHYTNTKLEVKKIPQELNNITKLNEHFSKFGTIVNIQVAFKGDPEAALIQYLTNEEARKAISSTEAVLNNRFIRVLWHRENNEQPALQSSAQILLQQQHTLSHLSQQHHSLPQHLHPQQVMVTQSSPSSVHGGIQKMMGKPQTSGAYVLNKVPVKHRLGHASTNQSDTSHLLNQTGGSSGEDCPVFSTPGHPKTIYSSSNLKAPSKLCSGSKSHDVQEVLKKKQEAMKLQQDMRKKKQEMLEKQIECQKMLISKLEKNKNMKPEERANIMKTLKELGEKISQLKDELKTSSTVSTPSKVKTKTEAQKELLDTELDLHKRLSSGEDTTELRKKLSQLQVEAARLGILPVGRGKTISSQGRGRGRGRGRGRGSLNHMVVDHRPKALPGGGFIEEEKDELLQHFSATNQASKFKDRRLQISWHKPKVPSISTETEEEEVKEEETETSDLFLHDDDDEDEDEYESRSWRR.

Disordered regions lie at residues 80 to 143 (PLEP…DGKW), 160 to 278 (YDWR…PKRR), and 319 to 416 (PPPG…PPPL). 2 stretches are compositionally biased toward basic and acidic residues: residues 84-102 (VKPEPKPLVQEKEEIKEEV) and 124-143 (SRSESSERRTREKKREDGKW). Positions 165–185 (GRSKSRSKSRGLSRSRSRSRG) are enriched in basic residues. The span at 186-211 (RSKDRDPNRNVEHRERSKFKSERNDL) shows a compositional bias: basic and acidic residues. Low complexity-rich tracts occupy residues 225–235 (SSEQYSSGAQS) and 255–268 (SWSNYYNNHSSSNS). The C3H1-type zinc finger occupies 273–301 (PPPKRRCRDYDERGFCVLGDLCQFDHGND). 2 stretches are compositionally biased toward pro residues: residues 319–356 (PPPGLPPPPPPGMLMPPMPGPGPGPGPGPGPGPGPGPG) and 371–384 (QPPPSVVLPIPRPP). The span at 387 to 402 (QSSLINSRDQPGTSAV) shows a compositional bias: polar residues. At threonine 447 the chain carries Phosphothreonine. Arginine 455 is subject to Omega-N-methylarginine. Residues 572 to 594 (LTKKPWLGKQGNNNQSKPGFLRK) are disordered. Positions 600–674 (TKLEVKKIPQ…RFIRVLWHRE (75 aa)) constitute an RRM domain. A disordered region spans residues 754 to 775 (HASTNQSDTSHLLNQTGGSSGE). The segment covering 755-770 (ASTNQSDTSHLLNQTG) has biased composition (polar residues). Residues 810–887 (VQEVLKKKQE…KDELKTSSTV (78 aa)) are a coiled coil. The residue at position 928 (serine 928) is a Phosphoserine. The interval 943–982 (GRGKTISSQGRGRGRGRGRGRGSLNHMVVDHRPKALPGGG) is disordered. Residues serine 1012 and serine 1020 each carry the phosphoserine modification. The segment at 1014 to 1060 (HKPKVPSISTETEEEEVKEEETETSDLFLHDDDDEDEDEYESRSWRR) is disordered. Composition is skewed to acidic residues over residues 1024–1037 (ETEEEEVKEEETET) and 1044–1053 (DDDDEDEDEY).

The protein localises to the cytoplasm. It is found in the nucleus speckle. Functionally, may be involved in the turnover of nuclear polyadenylated (pA+) RNA. This is RNA-binding protein 27 from Mus musculus (Mouse).